The primary structure comprises 183 residues: Ribosome-binding factor A (183 aa).

Positions 132 to 183 (PAGEADPYRDNGSVAQSPAPGGLGIRTSDGPEAVEAPLTCGGDTGDDDRPKE) are disordered.

This sequence belongs to the RbfA family. Monomer. Binds 30S ribosomal subunits, but not 50S ribosomal subunits or 70S ribosomes.

It is found in the cytoplasm. In terms of biological role, one of several proteins that assist in the late maturation steps of the functional core of the 30S ribosomal subunit. Associates with free 30S ribosomal subunits (but not with 30S subunits that are part of 70S ribosomes or polysomes). Required for efficient processing of 16S rRNA. May interact with the 5'-terminal helix region of 16S rRNA. The polypeptide is Ribosome-binding factor A (Mycobacterium tuberculosis (strain ATCC 25177 / H37Ra)).